A 167-amino-acid polypeptide reads, in one-letter code: uncharacterized protein (167 aa).

This is an uncharacterized protein from Methanocaldococcus jannaschii (strain ATCC 43067 / DSM 2661 / JAL-1 / JCM 10045 / NBRC 100440) (Methanococcus jannaschii).